The sequence spans 676 residues: RNA helicase NPH-II (676 aa).

The Helicase ATP-binding domain maps to 172 to 347 (FSAWISHRPV…VFLPNPAFIH (176 aa)). 185 to 192 (GGTGVGKT) lines the ATP pocket. Residues 296–299 (DEVH) carry the DEXH box motif. The Helicase C-terminal domain maps to 366 to 535 (NPSSRMAYIE…NYILYANKFN (170 aa)).

The protein belongs to the DEAD box helicase family. DEAH subfamily. In terms of assembly, monomer.

Its subcellular location is the virion. It catalyses the reaction ATP + H2O = ADP + phosphate + H(+). Functionally, NTP-dependent helicase that catalyzes unidirectional unwinding of 3'tailed duplex RNAs and plays an important role during transcription of early mRNAs, presumably by preventing R-loop formation behind the elongating RNA polymerase. Might also play a role in the export of newly synthesized mRNA chains out of the core into the cytoplasm. Required for replication and propagation of viral particles. This Homo sapiens (Human) protein is RNA helicase NPH-II (OPG084).